The chain runs to 369 residues: Serpentine receptor class epsilon-45 (369 aa).

A run of 8 helical transmembrane segments spans residues 1 to 21 (MIFL…IFIL), 39 to 59 (FVLT…AIHI), 67 to 87 (TVLL…NILI), 127 to 147 (FFLG…TLLV), 169 to 191 (GLFF…LFFF), 195 to 217 (HFAV…FTYV), 258 to 278 (VIHA…FMYL), and 291 to 311 (IFES…LGSV).

The protein belongs to the nematode receptor-like protein sre family.

Its subcellular location is the membrane. The polypeptide is Serpentine receptor class epsilon-45 (sre-45) (Caenorhabditis elegans).